Reading from the N-terminus, the 453-residue chain is Sensor histidine kinase CpxA (453 aa).

Residues 1 to 4 (MTAR) lie on the Cytoplasmic side of the membrane. The helical transmembrane segment at 5–25 (IFAIFWLTLALVLMLVLMLPK) threads the bilayer. The Periplasmic portion of the chain corresponds to 26-159 (LDSRQMTELL…SDFINLLFDR (134 aa)). Residues 160-180 (PLLLLIVTMLVSAPLLLWLAW) traverse the membrane as a helical segment. Residues 180-233 (WSLAKPARKLKNAADEVAQGNLRQHPELEAGPQEFLAAGASFNQMVTALERMMT) enclose the HAMP domain. The Cytoplasmic segment spans residues 181-453 (SLAKPARKLK…TIWLPLYKRT (273 aa)). The region spanning 241-451 (DISHELRTPL…RLTIWLPLYK (211 aa)) is the Histidine kinase domain. His244 serves as the catalytic Nucleophile. His244 carries the phosphohistidine; by autocatalysis modification. ATP-binding positions include 244–247 (HELR), 355–360 (RNALRY), Asp382, 401–402 (RT), and 412–417 (GTGLGL).

In terms of assembly, interacts with cognate response regulator CpxR.

The protein resides in the cell inner membrane. It catalyses the reaction ATP + protein L-histidine = ADP + protein N-phospho-L-histidine.. Its activity is regulated as follows. The two-component system is activated by envelope stress such as overexpression of some (misfolded) periplasmic proteins. In terms of biological role, histidine kinase member of the two-component regulatory system CpxA/CpxR which responds to envelope stress response by activating or, in some cases, repressing expression of downstream genes. Activates CpxR by phosphorylation. This Klebsiella pneumoniae subsp. pneumoniae (strain HS11286) protein is Sensor histidine kinase CpxA.